The primary structure comprises 219 residues: Probable GTP-binding protein EngB (219 aa).

Residues 24–207 (VQPEIAFAGR…HELIESWVRP (184 aa)) form the EngB-type G domain. GTP contacts are provided by residues 32–39 (GRSNAGKS), 59–63 (GRTQH), 81–84 (DLPG), 148–151 (TKCD), and 186–188 (FSA). Positions 39 and 61 each coordinate Mg(2+).

Belongs to the TRAFAC class TrmE-Era-EngA-EngB-Septin-like GTPase superfamily. EngB GTPase family. It depends on Mg(2+) as a cofactor.

Necessary for normal cell division and for the maintenance of normal septation. This is Probable GTP-binding protein EngB from Burkholderia ambifaria (strain MC40-6).